A 681-amino-acid polypeptide reads, in one-letter code: DNA ligase (681 aa).

NAD(+) is bound by residues 45 to 49, 94 to 95, and E120; these read DFDFD and SL. The active-site N6-AMP-lysine intermediate is K122. R143, E177, K289, and K313 together coordinate NAD(+). Zn(2+) contacts are provided by C403, C406, C421, and C426. The 89-residue stretch at 593–681 folds into the BRCT domain; that stretch reads SDQQPFAGQS…SLKINFKNTI (89 aa).

Belongs to the NAD-dependent DNA ligase family. LigA subfamily. Mg(2+) serves as cofactor. Mn(2+) is required as a cofactor.

The catalysed reaction is NAD(+) + (deoxyribonucleotide)n-3'-hydroxyl + 5'-phospho-(deoxyribonucleotide)m = (deoxyribonucleotide)n+m + AMP + beta-nicotinamide D-nucleotide.. Functionally, DNA ligase that catalyzes the formation of phosphodiester linkages between 5'-phosphoryl and 3'-hydroxyl groups in double-stranded DNA using NAD as a coenzyme and as the energy source for the reaction. It is essential for DNA replication and repair of damaged DNA. The polypeptide is DNA ligase (Leptospira borgpetersenii serovar Hardjo-bovis (strain L550)).